We begin with the raw amino-acid sequence, 938 residues long: Protein translocase subunit SecA (938 aa).

Residues Q90, 108 to 112 (GEGKT), and D504 contribute to the ATP site.

It belongs to the SecA family. As to quaternary structure, monomer and homodimer. Part of the essential Sec protein translocation apparatus which comprises SecA, SecYEG and auxiliary proteins SecDF. Other proteins may also be involved.

The protein resides in the cell inner membrane. It is found in the cellular thylakoid membrane. Its subcellular location is the cytoplasm. It carries out the reaction ATP + H2O + cellular proteinSide 1 = ADP + phosphate + cellular proteinSide 2.. In terms of biological role, part of the Sec protein translocase complex. Interacts with the SecYEG preprotein conducting channel. Has a central role in coupling the hydrolysis of ATP to the transfer of proteins into and across the cell membrane, serving as an ATP-driven molecular motor driving the stepwise translocation of polypeptide chains across the membrane. Its function is as follows. Probably participates in protein translocation into and across both the cytoplasmic and thylakoid membranes in cyanobacterial cells. The protein is Protein translocase subunit SecA of Picosynechococcus sp. (strain ATCC 27264 / PCC 7002 / PR-6) (Agmenellum quadruplicatum).